The primary structure comprises 359 residues: Src kinase-associated phosphoprotein 2 (359 aa).

3 positions are modified to phosphoserine: Ser-5, Ser-6, and Ser-9. The disordered stretch occupies residues 67-88 (GDAEDGEEYDDPFAGPPDTISL). Tyr-75 carries the post-translational modification Phosphotyrosine. A phosphoserine mark is found at Ser-87 and Ser-90. The region spanning 116–219 (FVLKAGYLEK…WVQQLKFVLQ (104 aa)) is the PH domain. Phosphotyrosine is present on residues Tyr-151 and Tyr-197. At Ser-223 the chain carries Phosphoserine. Phosphotyrosine is present on Tyr-261. The residue at position 286 (Ser-286) is a Phosphoserine. The 62-residue stretch at 297–358 (DYANFYQGLW…PKAYIMEMYD (62 aa)) folds into the SH3 domain.

The protein belongs to the SKAP family. In terms of assembly, interacts with FYB1, which is required for SKAP2 protein stability. Interacts with PTPNS1. Part of a complex consisting of SKAP2, FYB1 and PTPNS1. Part of a complex consisting of SKAP2, FYB1 and LILRB3. Interacts with LAT, GRB2, PTK2B, and PRAM1. May interact with actin. May interact with FYN, HCK and LYN. Interacts with FASLG.

It is found in the cytoplasm. In terms of biological role, may be involved in B-cell and macrophage adhesion processes. In B-cells, may act by coupling the B-cell receptor (BCR) to integrin activation. May play a role in src signaling pathway. This Pongo abelii (Sumatran orangutan) protein is Src kinase-associated phosphoprotein 2 (SKAP2).